We begin with the raw amino-acid sequence, 359 residues long: DNA integrity scanning protein DisA (359 aa).

In terms of domain architecture, DAC spans 7–146 (DDIFRATLAA…GRRYVLDGSA (140 aa)). ATP-binding positions include G74, L92, and 105 to 109 (TRHRT).

Belongs to the DisA family. As to quaternary structure, homooctamer. Mg(2+) serves as cofactor.

The enzyme catalyses 2 ATP = 3',3'-c-di-AMP + 2 diphosphate. Functionally, participates in a DNA-damage check-point that is active prior to asymmetric division when DNA is damaged. DisA forms globular foci that rapidly scan along the chromosomes during sporulation, searching for lesions. When a lesion is present, DisA pauses at the lesion site. This triggers a cellular response that culminates in a temporary block in sporulation initiation. Its function is as follows. Also has diadenylate cyclase activity, catalyzing the condensation of 2 ATP molecules into cyclic di-AMP (c-di-AMP). c-di-AMP acts as a signaling molecule that couples DNA integrity with progression of sporulation. The rise in c-di-AMP level generated by DisA while scanning the chromosome, operates as a positive signal that advances sporulation; upon encountering a lesion, the DisA focus arrests at the damaged site and halts c-di-AMP synthesis. The protein is DNA integrity scanning protein DisA of Frankia alni (strain DSM 45986 / CECT 9034 / ACN14a).